A 785-amino-acid chain; its full sequence is Protein SOK2 (785 aa).

Polar residues-rich tracts occupy residues 1-12 and 20-37; these read MPIGNPINTNDI and ESNM…GQST. Disordered regions lie at residues 1 to 45, 78 to 121, and 202 to 355; these read MPIG…QQQQ, SQSQ…SNAT, and STFE…STDQ. Residues 78–94 are compositionally biased toward low complexity; it reads SQSQQQLQSQPQMYQVQ. Polar residues predominate over residues 95 to 121; it reads ESFQSSGSDSNASNPPSTSVGVPSNAT. Composition is skewed to low complexity over residues 206–219 and 232–265; these read QQQQ…LQAQ and FSKF…SISS. Composition is skewed to polar residues over residues 266–282 and 304–318; these read LAQQ…STYQ and LTTP…NGPL. Low complexity predominate over residues 322–339; sequence LPQVGLLPPQQQQQVSPL. The HTH APSES-type domain occupies 414–520; sequence RVTTTMWEDE…RDIQSVLKQN (107 aa). A DNA-binding region (H-T-H motif) is located at residues 448–469; the sequence is GTKLLNVTKMTRGRRDGILKAE. Disordered stretches follow at residues 519–538 and 642–785; these read QNNP…IKSI and MNSA…KQEK. Composition is skewed to low complexity over residues 523–538 and 655–674; these read SNDS…IKSI and SKPL…SESN. Residues 687 to 702 are compositionally biased toward basic and acidic residues; it reads VESESASHSKWSKEAD. Residue S771 is modified to Phosphoserine.

Belongs to the EFG1/PHD1/stuA family.

It localises to the nucleus. Functionally, plays a general regulatory role in the cyclic AMP-dependent protein kinase-stimulated (PKA) signal transduction pathway by regulating the expression of genes important in growth and development. May inhibit the switch from unicellular to filamentous growth. The protein is Protein SOK2 (SOK2) of Saccharomyces cerevisiae (strain ATCC 204508 / S288c) (Baker's yeast).